An 876-amino-acid chain; its full sequence is AP-5 complex subunit beta-1 (876 aa).

Probably part of the adaptor protein complex 5 (AP-5), a tetramer composed of AP5B1, AP5M1, AP5S1 and AP5Z1. Interacts with ZFYVE26 and SPG11.

Functionally, as part of AP-5, a probable fifth adaptor protein complex it may be involved in endosomal transport. This chain is AP-5 complex subunit beta-1 (Ap5b1), found in Mus musculus (Mouse).